A 459-amino-acid polypeptide reads, in one-letter code: Cysteine--tRNA ligase (459 aa).

Residue Cys31 coordinates Zn(2+). The 'HIGH' region signature appears at 33 to 43 (PTVYDNPHIGN). The Zn(2+) site is built by Cys216, His241, and Glu245. Residues 274–278 (KMSKS) carry the 'KMSKS' region motif. An ATP-binding site is contributed by Lys277.

The protein belongs to the class-I aminoacyl-tRNA synthetase family. As to quaternary structure, monomer. Zn(2+) serves as cofactor.

It is found in the cytoplasm. It carries out the reaction tRNA(Cys) + L-cysteine + ATP = L-cysteinyl-tRNA(Cys) + AMP + diphosphate. The protein is Cysteine--tRNA ligase of Rickettsia massiliae (strain Mtu5).